The following is a 420-amino-acid chain: UDP-glucuronic acid decarboxylase 1 (420 aa).

Position 1 is an N-acetylmethionine (Met-1). Residues 1 to 19 (MVSKALLRLVSAVNRRRMK) are Cytoplasmic-facing. A helical; Signal-anchor for type II membrane protein transmembrane segment spans residues 20–40 (LLLGIALLAYVASVWGNFVNM). Topologically, residues 41–420 (RSIQENGELK…RIKKGRTRHS (380 aa)) are lumenal. Thr-94 is subject to Phosphothreonine. Positions 98, 99, 100, 119, 120, 122, 123, 124, 144, and 145 each coordinate NAD(+). UDP-alpha-D-glucuronate is bound by residues Leu-149 and Tyr-150. Positions 159 and 161 each coordinate NAD(+). Lys-177 is a UDP-alpha-D-glucuronate binding site. Thr-178 provides a ligand contact to NAD(+). UDP-alpha-D-glucuronate is bound by residues Asn-185, Gly-188, Lys-191, and Arg-192. NAD(+) contacts are provided by Ala-200, Tyr-231, and Lys-235. Tyr-231 serves as the catalytic Proton acceptor. Residues Tyr-245, Gln-248, and Glu-249 each contribute to the UDP-alpha-D-glucuronate site. Thr-261, His-267, and Arg-272 together coordinate NAD(+). N-linked (GlcNAc...) asparagine glycosylation is present at Asn-316.

This sequence belongs to the NAD(P)-dependent epimerase/dehydratase family. UDP-glucuronic acid decarboxylase subfamily. In terms of assembly, homodimer and homotetramer. Interacts with AKT1. Requires NAD(+) as cofactor.

It is found in the golgi apparatus. The protein resides in the golgi stack membrane. It catalyses the reaction UDP-alpha-D-glucuronate + H(+) = UDP-alpha-D-xylose + CO2. It functions in the pathway nucleotide-sugar biosynthesis; UDP-alpha-D-xylose biosynthesis; UDP-alpha-D-xylose from UDP-alpha-D-glucuronate: step 1/1. Functionally, catalyzes the NAD-dependent decarboxylation of UDP-glucuronic acid to UDP-xylose. Necessary for the biosynthesis of the core tetrasaccharide in glycosaminoglycan biosynthesis. The sequence is that of UDP-glucuronic acid decarboxylase 1 from Homo sapiens (Human).